A 316-amino-acid polypeptide reads, in one-letter code: Acetyl-coenzyme A carboxylase carboxyl transferase subunit alpha (316 aa).

The CoA carboxyltransferase C-terminal domain occupies 36-290 (LLEERLARLR…KEALLKALEE (255 aa)).

The protein belongs to the AccA family. In terms of assembly, acetyl-CoA carboxylase is a heterohexamer composed of biotin carboxyl carrier protein (AccB), biotin carboxylase (AccC) and two subunits each of ACCase subunit alpha (AccA) and ACCase subunit beta (AccD).

The protein localises to the cytoplasm. It catalyses the reaction N(6)-carboxybiotinyl-L-lysyl-[protein] + acetyl-CoA = N(6)-biotinyl-L-lysyl-[protein] + malonyl-CoA. It participates in lipid metabolism; malonyl-CoA biosynthesis; malonyl-CoA from acetyl-CoA: step 1/1. In terms of biological role, component of the acetyl coenzyme A carboxylase (ACC) complex. First, biotin carboxylase catalyzes the carboxylation of biotin on its carrier protein (BCCP) and then the CO(2) group is transferred by the carboxyltransferase to acetyl-CoA to form malonyl-CoA. The sequence is that of Acetyl-coenzyme A carboxylase carboxyl transferase subunit alpha from Thermus thermophilus (strain ATCC 27634 / DSM 579 / HB8).